Consider the following 207-residue polypeptide: Urease accessory protein UreG (207 aa).

A GTP-binding site is contributed by 12–19; that stretch reads GPVGAGKT.

This sequence belongs to the SIMIBI class G3E GTPase family. UreG subfamily. In terms of assembly, homodimer. UreD, UreF and UreG form a complex that acts as a GTP-hydrolysis-dependent molecular chaperone, activating the urease apoprotein by helping to assemble the nickel containing metallocenter of UreC. The UreE protein probably delivers the nickel.

It is found in the cytoplasm. Its function is as follows. Facilitates the functional incorporation of the urease nickel metallocenter. This process requires GTP hydrolysis, probably effectuated by UreG. The sequence is that of Urease accessory protein UreG from Cereibacter sphaeroides (strain ATCC 17029 / ATH 2.4.9) (Rhodobacter sphaeroides).